A 421-amino-acid chain; its full sequence is MIVSVSRSSISGTVCAPPSKSYTHRAVLITALSDSGCVHRPLISADTRATISACDAFGADVKLRGDSLEIQGVSGAPRTPENVIDVLNSGTTLRFMSAVAALTDGAVLTGDSSIRSRPNGPLLKALNELGAEAFSIRGNDRAPLVIRGRLRGGSTSLDGSVSSQFLSALLIACPLSSGETTISIKGELKSRPYAEMTLDILRKAGAEICTDGDIFRMRGGQSYRLAEYTVPGDFSSASYPLAAAALAGSATVEGLFPSRQGDSAIVDILREMGAEVSWDMESGEVRVSGADLRGREIDASQTPDLVPTLAVLGAVAEGRTVIKNAEHVRHKETDRIHAMAVELKKMGANIRERPDGLEIDGGDLHGADLHGYHDHRIVMALTLAGIVAGDTRIDTAESVDVSYPGFFEDMRRLGANVRAST.

Residues K20, S21, and R25 each coordinate 3-phosphoshikimate. Residue K20 participates in phosphoenolpyruvate binding. Residues G90 and R117 each contribute to the phosphoenolpyruvate site. Positions 162, 163, 164, 190, 304, and 331 each coordinate 3-phosphoshikimate. Residue Q164 coordinates phosphoenolpyruvate. Residue D304 is the Proton acceptor of the active site. 2 residues coordinate phosphoenolpyruvate: R335 and R376.

The protein belongs to the EPSP synthase family. Monomer.

Its subcellular location is the cytoplasm. The enzyme catalyses 3-phosphoshikimate + phosphoenolpyruvate = 5-O-(1-carboxyvinyl)-3-phosphoshikimate + phosphate. The protein operates within metabolic intermediate biosynthesis; chorismate biosynthesis. In terms of biological role, catalyzes the transfer of the enolpyruvyl moiety of phosphoenolpyruvate (PEP) to the 5-hydroxyl of shikimate-3-phosphate (S3P) to produce enolpyruvyl shikimate-3-phosphate and inorganic phosphate. In Methanothrix thermoacetophila (strain DSM 6194 / JCM 14653 / NBRC 101360 / PT) (Methanosaeta thermophila), this protein is 3-phosphoshikimate 1-carboxyvinyltransferase.